Here is a 158-residue protein sequence, read N- to C-terminus: Dysbindin domain-containing protein 2 (158 aa).

Residues 79–158 (FLPCEESSPA…DGGAEPGPCS (80 aa)) are disordered. Residues 106–131 (PTSDRTTSRTSSLSSDSSNLRSPNPS) are compositionally biased toward low complexity. S119 and S120 each carry phosphoserine. Position 137 is a phosphothreonine (T137). A Phosphoserine modification is found at S142. Acidic residues predominate over residues 142–151 (SDEEDGDDGG).

This sequence belongs to the dysbindin family. As to quaternary structure, monomer. Interacts with CSNK1D and CSNK1E.

May modulate the activity of casein kinase-1. Inhibits CSNK1D autophosphorylation (in vitro). This chain is Dysbindin domain-containing protein 2 (Dbndd2), found in Mus musculus (Mouse).